We begin with the raw amino-acid sequence, 301 residues long: GTPase Era (301 aa).

The region spanning 6–173 (KSGFVAIVGR…LEQTNANLEI (168 aa)) is the Era-type G domain. The tract at residues 14-21 (GRPNVGKS) is G1. 14–21 (GRPNVGKS) is a binding site for GTP. A G2 region spans residues 40-44 (QTTRN). Positions 61-64 (DTPG) are G3. GTP is bound by residues 61–65 (DTPGI) and 123–126 (NKID). The G4 stretch occupies residues 123-126 (NKID). Residues 152–154 (ISA) form a G5 region. The region spanning 204-282 (TREEVPHSVA…FLEIWVKVQK (79 aa)) is the KH type-2 domain.

It belongs to the TRAFAC class TrmE-Era-EngA-EngB-Septin-like GTPase superfamily. Era GTPase family. As to quaternary structure, monomer.

The protein localises to the cytoplasm. Its subcellular location is the cell membrane. An essential GTPase that binds both GDP and GTP, with rapid nucleotide exchange. Plays a role in 16S rRNA processing and 30S ribosomal subunit biogenesis and possibly also in cell cycle regulation and energy metabolism. The polypeptide is GTPase Era (Listeria welshimeri serovar 6b (strain ATCC 35897 / DSM 20650 / CCUG 15529 / CIP 8149 / NCTC 11857 / SLCC 5334 / V8)).